Reading from the N-terminus, the 743-residue chain is NAD(P)H-quinone oxidoreductase subunit 5, chloroplastic (743 aa).

A run of 16 helical transmembrane segments spans residues 9-29 (WIIPFLPLPVPMLIGLGLLLF), 40-60 (WAFQSVLLLSIVMIFSMNLSI), 89-109 (IDPLTSIMSILITTVGIMVLI), 125-145 (FAYMSFFSTSMLGLVTSSNLI), 147-167 (IYIFWELVGMCSYLLIGFWFT), 185-205 (GDFGLLLGILGFYWITGSFEF), 219-239 (NEVNFLFVTLCAVLLFAGAIA), 258-278 (TPISALIHAATMVAAGIFLVA), 284-304 (FIVIPHIMNLISLIGIITVFF), 327-347 (LGYMMLALGMGSYRSALFHLI), 354-374 (ALLFLGSGSVIHSMETLVGYC), 396-416 (NSFLLGTLSLCGIPPLACFWS), 425-445 (WLYSPIFAIIAWSTAGLTAFY), 551-571 (LFPILILILFTLFVGFLGIPF), 607-627 (VFSVSIASFGIYIAFFLYKPV), and 723-743 (YLFFYFSYVSIFLFIYYFLNL).

It belongs to the complex I subunit 5 family. NDH is composed of at least 16 different subunits, 5 of which are encoded in the nucleus.

It localises to the plastid. It is found in the chloroplast thylakoid membrane. The enzyme catalyses a plastoquinone + NADH + (n+1) H(+)(in) = a plastoquinol + NAD(+) + n H(+)(out). It carries out the reaction a plastoquinone + NADPH + (n+1) H(+)(in) = a plastoquinol + NADP(+) + n H(+)(out). Its function is as follows. NDH shuttles electrons from NAD(P)H:plastoquinone, via FMN and iron-sulfur (Fe-S) centers, to quinones in the photosynthetic chain and possibly in a chloroplast respiratory chain. The immediate electron acceptor for the enzyme in this species is believed to be plastoquinone. Couples the redox reaction to proton translocation, and thus conserves the redox energy in a proton gradient. The chain is NAD(P)H-quinone oxidoreductase subunit 5, chloroplastic (ndhF) from Ambrosia trifida (Giant ragweed).